The chain runs to 491 residues: MSNILRRGRLEAAQDEEILRYTSSMEADRWIFDADIAVDLAHTVMLKEQGIINREDCSKILSGLLKIREEGMEKLDFSYEDIHISLESRLIDMVGEDVGGRMHSGRSRNDEVATCIRLVLREELTGLLEEIHELRQALLTLAEKHTETLMPGFTHMQHAQPTTLAHHLCAHEAALGRDFDRIQDAYSRVNLCPLGAAAFASTGFNLNRKRTQELLGFDGLLENSMDAVSTRDFLIECASGFTNLMINLSRMAEELVIWSSSEFNFIELDDMYASTSSIMPQKKNPDTAELMRGKTGVAVGALMSLITICKGLPLSYNRDLQEATPNLWRSVETVRASVRIMEGMIKTMKVRPEVLVAQSVTGFTTATELADTFVRETGIPFRTAHQIVGMLAREMEKPTLKKIDSVAEIVLGESLSSRGLKEKMVKEALNPFSNVEIRKIAGGPAPEEMRNYLSKRQTELELNRQEIATLKDITDSAFENLLATVNEYRQA.

It belongs to the lyase 1 family. Argininosuccinate lyase subfamily.

Its subcellular location is the cytoplasm. The enzyme catalyses 2-(N(omega)-L-arginino)succinate = fumarate + L-arginine. It functions in the pathway amino-acid biosynthesis; L-arginine biosynthesis; L-arginine from L-ornithine and carbamoyl phosphate: step 3/3. The polypeptide is Argininosuccinate lyase (Methanosarcina barkeri (strain Fusaro / DSM 804)).